The primary structure comprises 1131 residues: DNA-directed RNA polymerase subunit beta (1131 aa).

The segment at 1108 to 1131 (QLARRTPPRPTYESLSRESLDDDE) is disordered. Residues 1122–1131 (LSRESLDDDE) are compositionally biased toward basic and acidic residues.

The protein belongs to the RNA polymerase beta chain family. In terms of assembly, in cyanobacteria the RNAP catalytic core is composed of 2 alpha, 1 beta, 1 beta', 1 gamma and 1 omega subunit. When a sigma factor is associated with the core the holoenzyme is formed, which can initiate transcription.

The catalysed reaction is RNA(n) + a ribonucleoside 5'-triphosphate = RNA(n+1) + diphosphate. In terms of biological role, DNA-dependent RNA polymerase catalyzes the transcription of DNA into RNA using the four ribonucleoside triphosphates as substrates. This is DNA-directed RNA polymerase subunit beta from Nostoc sp. (strain PCC 7120 / SAG 25.82 / UTEX 2576).